Reading from the N-terminus, the 538-residue chain is Guanine nucleotide-binding protein-like 3 (538 aa).

Residues 1-45 (MKRPKLKKASKRMTCHKRYKIQKKVREHHRKLRKEAKKRGHKKPK) are compositionally biased toward basic residues. The disordered stretch occupies residues 1 to 125 (MKRPKLKKAS…KAKSGKQNPK (125 aa)). The segment at 2-46 (KRPKLKKASKRMTCHKRYKIQKKVREHHRKLRKEAKKRGHKKPKK) is basic. Positions 54–95 (APFKEALLREAELRKQQLEELKQQQKLDRQKEQERKRKLEIS) form a coiled coil. Over residues 59 to 94 (ALLREAELRKQQLEELKQQQKLDRQKEQERKRKLEI) the composition is skewed to basic and acidic residues. N6-acetyllysine is present on K79. K91 is covalently cross-linked (Glycyl lysine isopeptide (Lys-Gly) (interchain with G-Cter in SUMO2)). S95 and S101 each carry phosphoserine. The segment covering 95–110 (SPDDEQSNVETQEESD) has biased composition (acidic residues). The segment covering 115–125 (KKAKSGKQNPK) has biased composition (basic residues). Residues 129 to 307 (CQELKKVIEA…IIDSPCFIIS (179 aa)) form the CP-type G domain. 176–179 (NKSD) contacts GTP. Glycyl lysine isopeptide (Lys-Gly) (interchain with G-Cter in SUMO2) cross-links involve residues K177, K248, K262, and K270. 256–263 (GFPNVGKS) is a GTP binding site. An intermediate region spans residues 277 to 451 (VGVSMGLTRS…HLTNKILFRS (175 aa)). Position 300-303 (300-303 (DSPC)) interacts with GTP. Composition is skewed to basic and acidic residues over residues 460–473 (EEKD…KQTE) and 481–491 (QEHVTGEKNAE). The acidic stretch occupies residues 460–532 (EEKDIPEESP…KMSEEDDAYD (73 aa)). The segment at 460–538 (EEKDIPEESP…DAYDFTTDYI (79 aa)) is disordered. S493, S505, and S518 each carry phosphoserine. Positions 514–524 (PSDRSFILDKM) are enriched in basic and acidic residues.

Belongs to the TRAFAC class YlqF/YawG GTPase family. Interacts with MDM2; this interaction stabilizes MDM2. Interaction with MDM2 occurs in the nucleoplasm and is triggered by a nucleolar release mechanism, such as mitosis-induced nucleolar disassembly. May interact with p53/TP53 via its basic domain. This interaction is most probably indirect and mediated by MDM2-binding. As to expression, expressed in testis.

It localises to the nucleus. Its subcellular location is the nucleolus. In terms of biological role, may be required to maintain the proliferative capacity of stem cells. Stabilizes MDM2 by preventing its ubiquitination, and hence proteasomal degradation. In Rattus norvegicus (Rat), this protein is Guanine nucleotide-binding protein-like 3 (Gnl3).